The following is a 172-amino-acid chain: Epididymal secretory protein 4 (172 aa).

The first 21 residues, 1–21 (MIAVLLLVFGMTPDYIFPVSA), serve as a signal peptide directing secretion. A disulfide bond links Cys-82 and Cys-167.

Belongs to the calycin superfamily. Lipocalin family. Secreted by the epididymal epithelial cells.

It localises to the secreted. It is found in the extracellular space. In terms of biological role, could transport small hydrophobic molecules into the epididymal fluid during the sperm maturation. Binds to the head region of spermatozoa and plays a key role in sperm maturation. The sequence is that of Epididymal secretory protein 4 from Zootoca vivipara (Common lizard).